Here is a 486-residue protein sequence, read N- to C-terminus: Ty transcription activator TEC1 (486 aa).

An N-acetylserine modification is found at Ser2. The segment at residues Trp125 to Lys199 is a DNA-binding region (TEA). Ser325 is subject to Phosphoserine. Disordered regions lie at residues Glu372–Val410 and His465–Tyr486. Positions Pro377–Glu388 are enriched in low complexity. Over residues Gln472–Tyr486 the composition is skewed to polar residues.

This sequence belongs to the TEC1 family.

It is found in the nucleus. TEC1 is involved in the activation of TY1 and TY1-mediated gene expression. It is not involved in mating or sporulation processes. This Saccharomyces cerevisiae (strain ATCC 204508 / S288c) (Baker's yeast) protein is Ty transcription activator TEC1 (TEC1).